Here is a 57-residue protein sequence, read N- to C-terminus: Protein translocase subunit SecE (57 aa).

The helical transmembrane segment at 30–50 threads the bilayer; it reads LIAGAGIVFVGFLGFLIFAIM.

This sequence belongs to the SecE/SEC61-gamma family. In terms of assembly, component of the Sec protein translocase complex. Heterotrimer consisting of SecY (alpha), SecG (beta) and SecE (gamma) subunits. The heterotrimers can form oligomers, although 1 heterotrimer is thought to be able to translocate proteins. Interacts with the ribosome. May interact with SecDF, and other proteins may be involved.

The protein localises to the cell membrane. Functionally, essential subunit of the Sec protein translocation channel SecYEG. Clamps together the 2 halves of SecY. May contact the channel plug during translocation. The polypeptide is Protein translocase subunit SecE (Haloquadratum walsbyi (strain DSM 16790 / HBSQ001)).